Here is a 707-residue protein sequence, read N- to C-terminus: Ribosomal RNA large subunit methyltransferase K/L (707 aa).

One can recognise a THUMP domain in the interval 43–154 (QIYRCCLWSR…KDKAILGVDM (112 aa)).

The protein belongs to the methyltransferase superfamily. RlmKL family.

The protein localises to the cytoplasm. The catalysed reaction is guanosine(2445) in 23S rRNA + S-adenosyl-L-methionine = N(2)-methylguanosine(2445) in 23S rRNA + S-adenosyl-L-homocysteine + H(+). It carries out the reaction guanosine(2069) in 23S rRNA + S-adenosyl-L-methionine = N(2)-methylguanosine(2069) in 23S rRNA + S-adenosyl-L-homocysteine + H(+). Specifically methylates the guanine in position 2445 (m2G2445) and the guanine in position 2069 (m7G2069) of 23S rRNA. This Vibrio campbellii (strain ATCC BAA-1116) protein is Ribosomal RNA large subunit methyltransferase K/L.